A 214-amino-acid polypeptide reads, in one-letter code: Thiamine pyrophosphokinase (214 aa).

It belongs to the thiamine pyrophosphokinase family.

The catalysed reaction is thiamine + ATP = thiamine diphosphate + AMP + H(+). The protein operates within cofactor biosynthesis; thiamine diphosphate biosynthesis; thiamine diphosphate from thiamine: step 1/1. In terms of biological role, catalyzes the ATP-dependent phosphorylation of thiamine to thiamine pyrophosphate. Is involved in thiamine salvage. The protein is Thiamine pyrophosphokinase of Bacillus subtilis (strain 168).